Consider the following 398-residue polypeptide: Inner membrane protein YjgN (398 aa).

The Cytoplasmic segment spans residues 1-24; sequence MAQVINEMDVPSHSFVFHGTGERY. A helical transmembrane segment spans residues 25–45; sequence FLICVVNVLLTIITLGIYLPW. Topologically, residues 46–73 are periplasmic; the sequence is ALMKCKRYLYANMEVNGQRFSYGITGGN. Residues 74-94 traverse the membrane as a helical segment; the sequence is VFFSCLVFVFFYFAILMTVSA. Asp-95 is a topological domain (cytoplasmic). Residues 96–116 traverse the membrane as a helical segment; the sequence is MPLIGCVLTLSLLVLLIFMAA. Over 117–142 the chain is Periplasmic; that stretch reads KGLRYQALMTSLNGVRFSFNCSMKGV. Residues 143–163 form a helical membrane-spanning segment; the sequence is WWVTFFLPILMAIGMGTVFFI. The Cytoplasmic segment spans residues 164-175; that stretch reads STKMLHANSSSS. The chain crosses the membrane as a helical span at residues 176–196; that stretch reads VIVSVVLMAIVGIVSIGIFNG. At 197 to 228 the chain is on the periplasmic side; it reads TLYSLVMSFLWSNTSFGIHRFKVKLDTAYCIK. The helical transmembrane segment at 229–249 threads the bilayer; that stretch reads YAILAFLALLPFLAVAGYIIF. The Cytoplasmic segment spans residues 250–278; the sequence is DQILNAYDSSVYANDDIENLQQFMEMQRK. The helical transmembrane segment at 279-299 threads the bilayer; the sequence is MIIAQLIYYFGIAVSTSYLTV. Topologically, residues 300-333 are periplasmic; it reads SLRNHFMSNLSLNDGRIRFRSTLTYHGMLYRMCA. The helical transmembrane segment at 334–354 threads the bilayer; it reads LVVISGITGGLAYPLLKIWMI. The Cytoplasmic segment spans residues 355–398; it reads DWQAKNTYLLGDLDDLPLINKEEQPDKGFLASISRGIMPSLPFL.

The protein resides in the cell inner membrane. The sequence is that of Inner membrane protein YjgN (yjgN) from Escherichia coli O157:H7.